The chain runs to 327 residues: Apoptosis facilitator Bcl-2-like protein 14 (327 aa).

S44 carries the post-translational modification Phosphoserine. The BH3 motif lies at 212–226; it reads IVELLKYSGDQLERK. Residues 308–315 carry the BH2 motif; it reads WIQQHGGW.

It belongs to the Bcl-2 family. In terms of processing, phosphorylated by MELK, leading to inhibit its pro-apoptotic function. As to expression, isoform 1 is widely expressed. Isoform 2 is testis-specific.

The protein resides in the cytoplasm. It is found in the cytosol. The protein localises to the endomembrane system. Its function is as follows. Plays a role in apoptosis. This Homo sapiens (Human) protein is Apoptosis facilitator Bcl-2-like protein 14 (BCL2L14).